We begin with the raw amino-acid sequence, 453 residues long: Cyclic GMP-AMP phosphodiesterase SMPDL3A (453 aa).

The first 22 residues, 1-22 (MALVRALVCCLLTAWHCRSGLG), serve as a signal peptide directing secretion. The Zn(2+) site is built by Asp-45 and His-47. A disulfide bond links Cys-62 and Cys-81. Asn-69 carries an N-linked (GlcNAc...) asparagine glycan. Residue Asp-110 coordinates Zn(2+). His-114 contributes to the ATP binding site. N-linked (GlcNAc...) asparagine glycosylation is present at Asn-131. Asn-151 lines the Zn(2+) pocket. ATP-binding residues include Asn-151 and His-152. N-linked (GlcNAc...) asparagine glycans are attached at residues Asn-222 and Asn-238. Position 252 (His-252) interacts with Zn(2+). Residue Asn-263 is glycosylated (N-linked (GlcNAc...) asparagine). The Zn(2+) site is built by His-293 and His-295. Asn-356 carries an N-linked (GlcNAc...) asparagine glycan. Cystine bridges form between Cys-420/Cys-424 and Cys-430/Cys-443. Asn-437 carries N-linked (GlcNAc...) asparagine glycosylation.

Belongs to the acid sphingomyelinase family. In terms of assembly, monomer. Homodimer; homodimerizes following 2',3'-cGAMP-binding. Requires Zn(2+) as cofactor. Post-translationally, N-glycosylation is required for protein maturation, secretion and phosphodiesterase activity. In terms of tissue distribution, detected in blood serum. Detected in macrophages (at protein level).

The protein resides in the secreted. It carries out the reaction 2',3'-cGAMP + H2O = 5'-pGpA(2'-5') + H(+). The catalysed reaction is 5'-pGpA(2'-5') + H2O = 5'-GpA(2'-5') + phosphate. It catalyses the reaction a ribonucleoside 5'-triphosphate + H2O = a ribonucleoside 5'-diphosphate + phosphate + H(+). The enzyme catalyses ATP + H2O = ADP + phosphate + H(+). With respect to regulation, requires micromolar levels of Zn(2+) for activity. Inhibited by millimolar levels of Zn(2+). Functionally, cyclic-nucleotide phosphodiesterase that acts as a negative regulator of innate immunity by mediating degradation of 2',3'-cGAMP, thereby inhibiting the cGAS-STING signaling. Specifically linearizes 2',3'-cGAMP into 2'5'-bond pGpA and further hydrolyzes pGpA to produce GpA. Also has in vitro nucleotide phosphodiesterase activity with nucleoside triphosphates, such as ATP. Has in vitro activity with p-nitrophenyl-TMP. Has lower activity with nucleoside diphosphates, and no activity with nucleoside monophosphates. Has in vitro activity with CDP-choline, giving rise to CMP and phosphocholine. Has in vitro activity with CDP-ethanolamine. Does not have sphingomyelin phosphodiesterase activity. This Homo sapiens (Human) protein is Cyclic GMP-AMP phosphodiesterase SMPDL3A.